The following is a 980-amino-acid chain: Probable outer membrane protein PmpH (980 aa).

A signal peptide spans 1–24; it reads MPFSLRSTSFCFLACLCSYSYGLA. Residues 661–980 enclose the Autotransporter domain; the sequence is GELVPNSLWV…FVSLGLNRIF (320 aa).

Belongs to the PMP outer membrane protein family.

The protein localises to the secreted. It localises to the cell wall. The protein resides in the cell outer membrane. This Chlamydia muridarum (strain MoPn / Nigg) protein is Probable outer membrane protein PmpH (pmpH).